The chain runs to 293 residues: Acetyl-coenzyme A carboxylase carboxyl transferase subunit beta (293 aa).

The CoA carboxyltransferase N-terminal domain occupies 29–293 (LWVKCSECSQ…GVKELAEANI (265 aa)). Cysteine 33, cysteine 36, cysteine 52, and cysteine 55 together coordinate Zn(2+). The C4-type zinc finger occupies 33 to 55 (CSECSQVAYRKDLISNFNVCSNC).

Belongs to the AccD/PCCB family. Acetyl-CoA carboxylase is a heterohexamer composed of biotin carboxyl carrier protein (AccB), biotin carboxylase (AccC) and two subunits each of ACCase subunit alpha (AccA) and ACCase subunit beta (AccD). The cofactor is Zn(2+).

Its subcellular location is the cytoplasm. The enzyme catalyses N(6)-carboxybiotinyl-L-lysyl-[protein] + acetyl-CoA = N(6)-biotinyl-L-lysyl-[protein] + malonyl-CoA. It functions in the pathway lipid metabolism; malonyl-CoA biosynthesis; malonyl-CoA from acetyl-CoA: step 1/1. Its function is as follows. Component of the acetyl coenzyme A carboxylase (ACC) complex. Biotin carboxylase (BC) catalyzes the carboxylation of biotin on its carrier protein (BCCP) and then the CO(2) group is transferred by the transcarboxylase to acetyl-CoA to form malonyl-CoA. In Prochlorococcus marinus (strain MIT 9312), this protein is Acetyl-coenzyme A carboxylase carboxyl transferase subunit beta.